A 400-amino-acid polypeptide reads, in one-letter code: DNA primase large subunit PriL (400 aa).

Positions 247, 356, 367, and 373 each coordinate [4Fe-4S] cluster.

It belongs to the eukaryotic-type primase large subunit family. As to quaternary structure, heterodimer of a small subunit (PriS) and a large subunit (PriL). Requires [4Fe-4S] cluster as cofactor.

Regulatory subunit of DNA primase, an RNA polymerase that catalyzes the synthesis of short RNA molecules used as primers for DNA polymerase during DNA replication. Stabilizes and modulates the activity of the small subunit, increasing the rate of DNA synthesis, and conferring RNA synthesis capability. The DNA polymerase activity may enable DNA primase to also catalyze primer extension after primer synthesis. May also play a role in DNA repair. In Thermococcus kodakarensis (strain ATCC BAA-918 / JCM 12380 / KOD1) (Pyrococcus kodakaraensis (strain KOD1)), this protein is DNA primase large subunit PriL.